A 402-amino-acid polypeptide reads, in one-letter code: Olfactomedin-like protein 1 (402 aa).

An N-terminal signal peptide occupies residues 1–28 (MMVALPGASASLVLFLAAFLPPLQHAQD). Asn-66 carries N-linked (GlcNAc...) asparagine glycosylation. Positions 73–135 (RCQTHTNEYR…EAEEEKKIRT (63 aa)) form a coiled coil. 2 N-linked (GlcNAc...) asparagine glycosylation sites follow: Asn-138 and Asn-183. Residues 140 to 397 (SCDNMLMAIK…QIIYKLQTKK (258 aa)) form the Olfactomedin-like domain. Residues Cys-141 and Cys-324 are joined by a disulfide bond.

In terms of processing, highly N-glycosylated.

It is found in the secreted. The chain is Olfactomedin-like protein 1 (Olfml1) from Rattus norvegicus (Rat).